A 585-amino-acid chain; its full sequence is Cytochrome c lysine N-methyltransferase 1 (585 aa).

One can recognise an SET domain in the interval 18–273 (KSLSLKPSTI…KPIEVFISYS (256 aa)). Positions 186 to 288 (LNLSDIKHLY…FSMLVTYGFT (103 aa)) are SET-like.

Belongs to the class V-like SAM-binding methyltransferase superfamily.

It localises to the cytoplasm. Its subcellular location is the cytosol. It carries out the reaction L-lysyl-[cytochrome c] + S-adenosyl-L-methionine = N(6)-methyl-L-lysyl-[cytochrome c] + S-adenosyl-L-homocysteine + H(+). Methyltransferase which mediates trimethylation of 'Lys-78' of cytochrome c (CYC1). In Saccharomyces cerevisiae (strain ATCC 204508 / S288c) (Baker's yeast), this protein is Cytochrome c lysine N-methyltransferase 1 (CTM1).